The following is a 324-amino-acid chain: Elongation factor P--(R)-beta-lysine ligase (324 aa).

75 to 77 provides a ligand contact to substrate; the sequence is SPE. ATP-binding positions include 99–101 and N108; that span reads RNQ. Y117 contributes to the substrate binding site. 243–244 lines the ATP pocket; the sequence is EL. E250 contributes to the substrate binding site. G299 is an ATP binding site.

The protein belongs to the class-II aminoacyl-tRNA synthetase family. EpmA subfamily. Homodimer.

The enzyme catalyses D-beta-lysine + L-lysyl-[protein] + ATP = N(6)-((3R)-3,6-diaminohexanoyl)-L-lysyl-[protein] + AMP + diphosphate + H(+). Functionally, with EpmB is involved in the beta-lysylation step of the post-translational modification of translation elongation factor P (EF-P). Catalyzes the ATP-dependent activation of (R)-beta-lysine produced by EpmB, forming a lysyl-adenylate, from which the beta-lysyl moiety is then transferred to the epsilon-amino group of a conserved specific lysine residue in EF-P. This Buchnera aphidicola subsp. Schizaphis graminum (strain Sg) protein is Elongation factor P--(R)-beta-lysine ligase.